The primary structure comprises 153 residues: Prophage Rz endopeptidase RzpD (153 aa).

Functionally, necessary for host cell lysis. It is believed to code for an endopeptidase that cleaves the amino-carboxyl cross-link between the diaminopimelic acid and D-alanine residues in the murein component of the bacterial cell wall. The protein is Prophage Rz endopeptidase RzpD (rzpD) of Escherichia coli (strain K12).